Here is a 407-residue protein sequence, read N- to C-terminus: Arylacetamide deacetylase-like 4 (407 aa).

The Cytoplasmic segment spans residues 1-4 (MAVP). The chain crosses the membrane as a helical; Signal-anchor for type II membrane protein span at residues 5–25 (WLVLLLALPIFFLGVFVWAVF). Residues 26–407 (EHFLTTDIPA…NAVVSYIKGI (382 aa)) lie on the Lumenal side of the membrane. The Involved in the stabilization of the negatively charged intermediate by the formation of the oxyanion hole motif lies at 119 to 121 (HGG). Asn-168 carries an N-linked (GlcNAc...) asparagine glycan. Ser-193 is a catalytic residue. Residue Asn-269 is glycosylated (N-linked (GlcNAc...) asparagine). Residues Asp-347 and His-377 contribute to the active site.

This sequence belongs to the 'GDXG' lipolytic enzyme family.

Its subcellular location is the membrane. The chain is Arylacetamide deacetylase-like 4 (AADACL4) from Homo sapiens (Human).